The following is a 149-amino-acid chain: Calmodulin (149 aa).

The residue at position 2 (alanine 2) is an N-acetylalanine. 4 EF-hand domains span residues 8-43 (EQIAEFKEAFSLFDKDGDGTITTKELGTVMRSLGQN), 44-79 (PTEAELQDMINEVDTDGNGTIDFPEFLTMMARKMKE), 81-116 (DSEEEIREAFRVFDKDGNGFISAAELRHVMTNLGEK), and 117-149 (LTDEEVDEMIREADTDGDGQVNYEEFVGMMTSK). Residues aspartate 21, aspartate 23, aspartate 25, threonine 27, glutamate 32, aspartate 57, aspartate 59, asparagine 61, threonine 63, glutamate 68, aspartate 94, aspartate 96, asparagine 98, and glutamate 105 each contribute to the Ca(2+) site. Residue lysine 116 is modified to N6,N6,N6-trimethyllysine. Residues aspartate 130, aspartate 132, aspartate 134, glutamine 136, and glutamate 141 each contribute to the Ca(2+) site.

Belongs to the calmodulin family.

In terms of biological role, calmodulin mediates the control of a large number of enzymes, ion channels and other proteins by Ca(2+). Among the enzymes to be stimulated by the calmodulin-Ca(2+) complex are a number of protein kinases and phosphatases. This chain is Calmodulin, found in Suberites domuncula (Sponge).